The chain runs to 343 residues: Selenide, water dikinase (343 aa).

Sec16 is a catalytic residue. Position 16 (Sec16) is a non-standard amino acid, selenocysteine. ATP is bound by residues Lys19 and 46–48 (GAE). Asp49 lines the Mg(2+) pocket. ATP is bound by residues Asp66, Asp89, and 137–139 (GHT). Asp89 provides a ligand contact to Mg(2+). Asp225 provides a ligand contact to Mg(2+).

The protein belongs to the selenophosphate synthase 1 family. Class I subfamily. In terms of assembly, homodimer. The cofactor is Mg(2+).

The catalysed reaction is hydrogenselenide + ATP + H2O = selenophosphate + AMP + phosphate + 2 H(+). In terms of biological role, synthesizes selenophosphate from selenide and ATP. This Geobacter sp. (strain M21) protein is Selenide, water dikinase.